The following is a 72-amino-acid chain: Translation initiation factor IF-1 (72 aa).

The S1-like domain maps to 1–72 (MSKEDVIELE…TRGRIVWRSK (72 aa)).

It belongs to the IF-1 family. Component of the 30S ribosomal translation pre-initiation complex which assembles on the 30S ribosome in the order IF-2 and IF-3, IF-1 and N-formylmethionyl-tRNA(fMet); mRNA recruitment can occur at any time during PIC assembly.

It is found in the cytoplasm. Its function is as follows. One of the essential components for the initiation of protein synthesis. Stabilizes the binding of IF-2 and IF-3 on the 30S subunit to which N-formylmethionyl-tRNA(fMet) subsequently binds. Helps modulate mRNA selection, yielding the 30S pre-initiation complex (PIC). Upon addition of the 50S ribosomal subunit IF-1, IF-2 and IF-3 are released leaving the mature 70S translation initiation complex. In Caldicellulosiruptor saccharolyticus (strain ATCC 43494 / DSM 8903 / Tp8T 6331), this protein is Translation initiation factor IF-1.